The primary structure comprises 114 residues: Ribonuclease P protein component (114 aa).

Belongs to the RnpA family. In terms of assembly, consists of a catalytic RNA component (M1 or rnpB) and a protein subunit.

It carries out the reaction Endonucleolytic cleavage of RNA, removing 5'-extranucleotides from tRNA precursor.. Its function is as follows. RNaseP catalyzes the removal of the 5'-leader sequence from pre-tRNA to produce the mature 5'-terminus. It can also cleave other RNA substrates such as 4.5S RNA. The protein component plays an auxiliary but essential role in vivo by binding to the 5'-leader sequence and broadening the substrate specificity of the ribozyme. The polypeptide is Ribonuclease P protein component (Borrelia turicatae (strain 91E135)).